We begin with the raw amino-acid sequence, 212 residues long: Ropporin-1B (212 aa).

The RIIa domain occupies 12–49 (PELPKMLKEFAKAAIRAQPQDLIQWGADYFEALSRGET). Position 56 is a phosphoserine (Ser-56). The interaction with RHPN1 stretch occupies residues 209-212 (VWLE).

Belongs to the ropporin family. Homodimer. Interacts with RHPN1. May interact with SPA17. Interacts with AKAP3. Interacts with FSCB; the interaction increases upon spermatozoa capacitation conditions. Post-translationally, sumoylated, sumoylation decreases upon spermatozoa capacitation conditions.

The protein localises to the cell projection. The protein resides in the cilium. It localises to the flagellum. Its function is as follows. Important for male fertility. With ROPN1L, involved in fibrous sheath integrity and sperm motility, plays a role in PKA-dependent signaling processes required for spermatozoa capacitation. This Homo sapiens (Human) protein is Ropporin-1B (ROPN1B).